A 527-amino-acid polypeptide reads, in one-letter code: RUS family member 1 (527 aa).

N21 carries N-linked (GlcNAc...) asparagine glycosylation. Residues 220 to 240 traverse the membrane as a helical segment; that stretch reads SQETAVNLVGMLLSVIVSSFI. Residue N243 is glycosylated (N-linked (GlcNAc...) asparagine). A helical transmembrane segment spans residues 245–265; it reads SLIVTWLVFLFFTSLHLFCNY. N-linked (GlcNAc...) asparagine glycosylation occurs at N346. Residues 350 to 426 form a disordered region; it reads TKNVNNNNNN…NNNNNNNNNK (77 aa). N-linked (GlcNAc...) asparagine glycans are attached at residues N467 and N497.

This sequence belongs to the RUS1 family.

The protein localises to the membrane. The sequence is that of RUS family member 1 (rusf1) from Dictyostelium discoideum (Social amoeba).